The following is a 160-amino-acid chain: Bursicon (160 aa).

The signal sequence occupies residues 1–20 (MSVLNTFLVIVALILCYVND). In terms of domain architecture, CTCK spans 38–131 (CQECQMTAVI…PLQCMCRPCG (94 aa)). 5 cysteine pairs are disulfide-bonded: Cys-41–Cys-90, Cys-55–Cys-104, Cys-65–Cys-125, Cys-69–Cys-127, and Cys-87–Cys-130.

As to quaternary structure, heterodimer of burs and pburs.

Its subcellular location is the secreted. In terms of biological role, final heterodimeric neurohormone released at the end of the molting cycle, involved in the sclerotization (tanning) of the insect cuticle, melanization and wing spreading. The chain is Bursicon from Bombyx mori (Silk moth).